The chain runs to 445 residues: RNA pseudouridine synthase 2, chloroplastic (445 aa).

The transit peptide at 1 to 44 (MATTAAASPPAIATALSALLRRQRRRSSRCVGASHARCLAADAN) directs the protein to the chloroplast. Residues 47–66 (AVAPSRRGGHGGTRLEEAVP) form a disordered region. In terms of domain architecture, S4 RNA-binding spans 72–147 (SRIDAWISAR…IPLDIVYEDD (76 aa)). Residue Asp-235 is part of the active site.

This sequence belongs to the pseudouridine synthase RluA family.

Its subcellular location is the plastid. It localises to the chloroplast. The catalysed reaction is a uridine in RNA = a pseudouridine in RNA. In Oryza sativa subsp. japonica (Rice), this protein is RNA pseudouridine synthase 2, chloroplastic.